Consider the following 214-residue polypeptide: Sugar fermentation stimulation protein homolog (214 aa).

Belongs to the SfsA family.

The sequence is that of Sugar fermentation stimulation protein homolog from Aquifex aeolicus (strain VF5).